Reading from the N-terminus, the 627-residue chain is MTSQYAAELCALLVEDNFGELFARIFSTLQRYDRLSLPRLKFYSRLSDRQLRHGLSAMIQHHLVYHYTSYDDGVTYYEPNLQAAYYLVRSGKILEFIEERLGKYAATLMETIMFLGHAQVGYLETLPELQPAPPKANGVKQEAEGGESEEQMNGDDVHTSDQPALLHPTLKALASHGYIFRVRDAQFQSYADNALDAERAIKSRPDVKQLKGKKLDETVLEGTVTLLKERLDGDLTRGLMHNGLPRGAKRRHGTGSADATNKKARMDYVDADEDEDEEENEWSDDEMGGDTTPMELAIVVRVNYEKLDVALRNRRFLDLAEMNSSPVTAQVYEGLLRRIEYQTKQCRDSAEIPREGEEGEQYSVPIALSAVTEEVDPQLDLAGSIGPMEISQAINKRGKRPLEDSVNGTDREGSEAPSRTYEVDQHLSLLSQPPYNLTSKRVLSGLITWTVEFRHLARKLRHLELERMIEARYGDVALRVIRVLHAKGKLDEKRLQEISLLPFKDLRQVLASMQSGGFVDLQEVPRDAQRQPSRTIYLWYYDPDRIRSSILEDTYKAMSRCMQRLRFERNRLKEFLEKTERSDVKGNEERYLSQAELTLLEQWKAKEALLLGEVARLDEMVAVMRDY.

Disordered stretches follow at residues 131–162, 238–291, and 394–420; these read PAPP…TSDQ, GLMH…GGDT, and INKR…PSRT. 2 stretches are compositionally biased toward acidic residues: residues 144–153 and 269–288; these read EGGESEEQMN and VDAD…DEMG. The leucine-zipper stretch occupies residues 554–575; it reads TYKAMSRCMQRLRFERNRLKEF.

It belongs to the RNA polymerase beta chain family. Component of the RNA polymerase III (Pol III) complex consisting of 17 subunits.

It localises to the nucleus. In terms of biological role, DNA-dependent RNA polymerase catalyzes the transcription of DNA into RNA using the four ribonucleoside triphosphates as substrates. Specific core component of RNA polymerase III which synthesizes small RNAs, such as 5S rRNA and tRNAs. The polypeptide is DNA-directed RNA polymerase III subunit rpc3 (rpc82) (Aspergillus niger (strain ATCC MYA-4892 / CBS 513.88 / FGSC A1513)).